The following is a 420-amino-acid chain: RING finger protein 39 (420 aa).

The segment at 88–135 adopts an RING-type zinc-finger fold; the sequence is CPLCGGSFEDPVLLACEHSFCRACLARRWGTPPATGTEASPTACPCCG. The B30.2/SPRY domain maps to 210–420; the sequence is DDLPEDYPVV…APLRIVPAES (211 aa). A disordered region spans residues 246-265; sequence DRRSVQLAPPGTPAPPDGPK.

It localises to the cytoplasm. The catalysed reaction is S-ubiquitinyl-[E2 ubiquitin-conjugating enzyme]-L-cysteine + [acceptor protein]-L-lysine = [E2 ubiquitin-conjugating enzyme]-L-cysteine + N(6)-ubiquitinyl-[acceptor protein]-L-lysine.. It participates in protein modification; protein ubiquitination. In terms of biological role, plays an inhibitory role in anti-RNA viral innate immunity by targeting the adapter DDX3X and promoting its 'Lys-48'-linked polyubiquitination. Alternatively, enhances the cGAS-STING pathway activation by promoting 'Lys-63'-linked ubiquitination of STING1, facilitating the STING1-TBK1 complex formation and STING1 activation. This Pan troglodytes (Chimpanzee) protein is RING finger protein 39 (RNF39).